Here is a 200-residue protein sequence, read N- to C-terminus: Dephospho-CoA kinase (200 aa).

The region spanning 6–200 (AIALSGGIAT…KIKAKYLEKK (195 aa)) is the DPCK domain. An ATP-binding site is contributed by 14–19 (ATGKST).

It belongs to the CoaE family.

It is found in the cytoplasm. The enzyme catalyses 3'-dephospho-CoA + ATP = ADP + CoA + H(+). The protein operates within cofactor biosynthesis; coenzyme A biosynthesis; CoA from (R)-pantothenate: step 5/5. In terms of biological role, catalyzes the phosphorylation of the 3'-hydroxyl group of dephosphocoenzyme A to form coenzyme A. The polypeptide is Dephospho-CoA kinase (Sulfurimonas denitrificans (strain ATCC 33889 / DSM 1251) (Thiomicrospira denitrificans (strain ATCC 33889 / DSM 1251))).